Reading from the N-terminus, the 137-residue chain is Large ribosomal subunit protein uL16 (137 aa).

The segment covering 1–13 has biased composition (basic residues); that stretch reads MLQPSRRKYRKEQ. Residues 1 to 22 are disordered; that stretch reads MLQPSRRKYRKEQKGRNTGLAT.

The protein belongs to the universal ribosomal protein uL16 family. In terms of assembly, part of the 50S ribosomal subunit.

Binds 23S rRNA and is also seen to make contacts with the A and possibly P site tRNAs. In Azoarcus sp. (strain BH72), this protein is Large ribosomal subunit protein uL16.